We begin with the raw amino-acid sequence, 237 residues long: Ribose-5-phosphate isomerase A (237 aa).

Residues 30 to 33, 87 to 90, and 100 to 103 contribute to the substrate site; these read SGST, DGAD, and KGGG. Residue E109 is the Proton acceptor of the active site. K127 lines the substrate pocket.

The protein belongs to the ribose 5-phosphate isomerase family. As to quaternary structure, homodimer.

The enzyme catalyses aldehydo-D-ribose 5-phosphate = D-ribulose 5-phosphate. It participates in carbohydrate degradation; pentose phosphate pathway; D-ribose 5-phosphate from D-ribulose 5-phosphate (non-oxidative stage): step 1/1. Functionally, catalyzes the reversible conversion of ribose-5-phosphate to ribulose 5-phosphate. This chain is Ribose-5-phosphate isomerase A, found in Prochlorococcus marinus (strain SARG / CCMP1375 / SS120).